Here is a 359-residue protein sequence, read N- to C-terminus: Decorin (359 aa).

The signal sequence occupies residues 1-16 (MKATIILLLLAQVSWA). The propeptide occupies 17 to 30 (GPFQQRGLFDFMLE). Serine 34 carries an O-linked (Xyl...) (glycosaminoglycan) serine glycan. 2 disulfides stabilise this stretch: cysteine 54/cysteine 60 and cysteine 58/cysteine 67. 12 LRR repeats span residues 73–93 (DKVP…NNKI), 94–117 (TEIK…NNKI), 118–141 (SKVS…KNQL), 142–162 (KELP…ENEI), 163–186 (TKVR…TNPL), 187–212 (KSSG…DTNI), 213–233 (TSIP…GNKI), 234–257 (SRVD…FNSI), 258–281 (SAVD…NNKL), 282–304 (TRVP…NNNI), 305–334 (SVVG…SNPV), and 335–359 (QYWE…GNYK). An N-linked (GlcNAc...) asparagine glycan is attached at asparagine 211. N-linked (GlcNAc...) asparagine glycosylation is found at asparagine 262 and asparagine 303. A disulfide bridge connects residues cysteine 313 and cysteine 346.

Belongs to the small leucine-rich proteoglycan (SLRP) family. SLRP class I subfamily. As to quaternary structure, binds to type I and type II collagen, fibronectin and TGF-beta. Forms a ternary complex with MFAP2 and ELN. Interacts with DPT. The attached glycosaminoglycan chain can be either chondroitin sulfate or dermatan sulfate depending upon the tissue of origin. As to expression, detected in placenta (at protein level). Detected in cerebrospinal fluid, fibroblasts and urine (at protein level).

The protein localises to the secreted. Its subcellular location is the extracellular space. The protein resides in the extracellular matrix. In terms of biological role, may affect the rate of fibrils formation. The sequence is that of Decorin (DCN) from Homo sapiens (Human).